The chain runs to 591 residues: Aspartate--tRNA(Asp/Asn) ligase (591 aa).

Residue Glu176 coordinates L-aspartate. Residues 200-203 (QLFK) form an aspartate region. Arg222 contributes to the L-aspartate binding site. Residues 222 to 224 (RDE) and Gln231 contribute to the ATP site. His450 lines the L-aspartate pocket. Glu484 lines the ATP pocket. Residue Arg491 coordinates L-aspartate. 536-539 (GLDR) serves as a coordination point for ATP.

This sequence belongs to the class-II aminoacyl-tRNA synthetase family. Type 1 subfamily. Homodimer.

The protein localises to the cytoplasm. The enzyme catalyses tRNA(Asx) + L-aspartate + ATP = L-aspartyl-tRNA(Asx) + AMP + diphosphate. Its function is as follows. Aspartyl-tRNA synthetase with relaxed tRNA specificity since it is able to aspartylate not only its cognate tRNA(Asp) but also tRNA(Asn). Reaction proceeds in two steps: L-aspartate is first activated by ATP to form Asp-AMP and then transferred to the acceptor end of tRNA(Asp/Asn). The protein is Aspartate--tRNA(Asp/Asn) ligase of Bacillus cereus (strain ATCC 14579 / DSM 31 / CCUG 7414 / JCM 2152 / NBRC 15305 / NCIMB 9373 / NCTC 2599 / NRRL B-3711).